A 415-amino-acid polypeptide reads, in one-letter code: Phosphoribosylamine--glycine ligase (415 aa).

The ATP-grasp domain occupies 108-311 (KKIMEKYNIP…LMQHIIDLDE (204 aa)). 134–191 (IENCELPVVVKKDGLAAGKGVIIADTIEAARSAIEIMYGDEEEGTVVFETFLEGEEFS) is an ATP binding site. Glu-281 and Asn-283 together coordinate Mg(2+).

It belongs to the GARS family. The cofactor is Mg(2+). Mn(2+) is required as a cofactor.

It carries out the reaction 5-phospho-beta-D-ribosylamine + glycine + ATP = N(1)-(5-phospho-beta-D-ribosyl)glycinamide + ADP + phosphate + H(+). Its pathway is purine metabolism; IMP biosynthesis via de novo pathway; N(1)-(5-phospho-D-ribosyl)glycinamide from 5-phospho-alpha-D-ribose 1-diphosphate: step 2/2. This is Phosphoribosylamine--glycine ligase from Staphylococcus aureus (strain COL).